Consider the following 325-residue polypeptide: UPF0285 protein MM_0679 (325 aa).

This sequence belongs to the UPF0285 family.

This Methanosarcina mazei (strain ATCC BAA-159 / DSM 3647 / Goe1 / Go1 / JCM 11833 / OCM 88) (Methanosarcina frisia) protein is UPF0285 protein MM_0679.